Reading from the N-terminus, the 226-residue chain is ATP-dependent dethiobiotin synthetase BioD (226 aa).

12 to 17 (GVGKTV) serves as a coordination point for ATP. T16 serves as a coordination point for Mg(2+). K37 is an active-site residue. Position 41 (T41) interacts with substrate. Residues D49, 108–111 (EGAG), 169–170 (GS), and 197–199 (PAG) contribute to the ATP site. The Mg(2+) site is built by D49 and E108.

It belongs to the dethiobiotin synthetase family. As to quaternary structure, homodimer. Mg(2+) is required as a cofactor.

The protein resides in the cytoplasm. The catalysed reaction is (7R,8S)-7,8-diammoniononanoate + CO2 + ATP = (4R,5S)-dethiobiotin + ADP + phosphate + 3 H(+). The protein operates within cofactor biosynthesis; biotin biosynthesis; biotin from 7,8-diaminononanoate: step 1/2. Functionally, catalyzes a mechanistically unusual reaction, the ATP-dependent insertion of CO2 between the N7 and N8 nitrogen atoms of 7,8-diaminopelargonic acid (DAPA, also called 7,8-diammoniononanoate) to form a ureido ring. The protein is ATP-dependent dethiobiotin synthetase BioD of Mycobacterium leprae (strain Br4923).